Here is a 124-residue protein sequence, read N- to C-terminus: Probable S-adenosyl-L-methionine-binding protein VNG_1115H (124 aa).

The TsaA-like domain maps to 3-124; that stretch reads ATPIGYADTR…PVLDLKPALD (122 aa). Residues 20–22, 58–59, Arg-78, and 111–114 contribute to the S-adenosyl-L-methionine site; these read PRQ, DD, and AHGS.

The protein belongs to the tRNA methyltransferase O family.

The sequence is that of Probable S-adenosyl-L-methionine-binding protein VNG_1115H from Halobacterium salinarum (strain ATCC 700922 / JCM 11081 / NRC-1) (Halobacterium halobium).